Reading from the N-terminus, the 117-residue chain is Immunoglobulin kappa variable 1D-12 (117 aa).

Residues 1-22 (MDMMVPAQLLGLLLLWFPGSRC) form the signal peptide. Positions 23–45 (DIQMTQSPSSVSASVGDRVTITC) are framework-1. Residues 24–117 (IQMTQSPSSV…YYCQQANSFP (94 aa)) enclose the Ig-like domain. Cysteines 45 and 110 form a disulfide. The interval 46 to 56 (RASQGISSWLA) is complementarity-determining-1. Residues 57–71 (WYQQKPGKAPKLLIY) are framework-2. The segment at 72 to 78 (AASSLQS) is complementarity-determining-2. The segment at 79 to 110 (GVPSRFSGSGSGTDFTLTISSLQPEDFATYYC) is framework-3. Positions 111 to 117 (QQANSFP) are complementarity-determining-3.

Immunoglobulins are composed of two identical heavy chains and two identical light chains; disulfide-linked.

The protein localises to the secreted. Its subcellular location is the cell membrane. V region of the variable domain of immunoglobulin light chains that participates in the antigen recognition. Immunoglobulins, also known as antibodies, are membrane-bound or secreted glycoproteins produced by B lymphocytes. In the recognition phase of humoral immunity, the membrane-bound immunoglobulins serve as receptors which, upon binding of a specific antigen, trigger the clonal expansion and differentiation of B lymphocytes into immunoglobulins-secreting plasma cells. Secreted immunoglobulins mediate the effector phase of humoral immunity, which results in the elimination of bound antigens. The antigen binding site is formed by the variable domain of one heavy chain, together with that of its associated light chain. Thus, each immunoglobulin has two antigen binding sites with remarkable affinity for a particular antigen. The variable domains are assembled by a process called V-(D)-J rearrangement and can then be subjected to somatic hypermutations which, after exposure to antigen and selection, allow affinity maturation for a particular antigen. This chain is Immunoglobulin kappa variable 1D-12, found in Homo sapiens (Human).